The following is a 227-amino-acid chain: MAYPLQLGFQDATSPVMEELLHFHDHTLMIIFLISSLVLYIIMLMLTTKLIHTNMMNVQEMEMIWTILPAIILILIALPSLHTLYMMDEINNPLLTIKTMGHQWFWSYEYTDYEDLAFDSYMITTDSLKFGELRLLEVDNRMVLPTDLPVRVLVSSEDVLHSWAVPSLGLKTDAIPGRLNQVTLTSMRPGLFYGQCSEICGANHSFMPIVLELVPLKYFESWSASLA.

Residues 1 to 14 lie on the Mitochondrial intermembrane side of the membrane; sequence MAYPLQLGFQDATS. Residues 15–45 traverse the membrane as a helical segment; sequence PVMEELLHFHDHTLMIIFLISSLVLYIIMLM. Residues 46–59 are Mitochondrial matrix-facing; the sequence is LTTKLIHTNMMNVQ. A helical membrane pass occupies residues 60-87; that stretch reads EMEMIWTILPAIILILIALPSLHTLYMM. Residues 88 to 227 lie on the Mitochondrial intermembrane side of the membrane; it reads DEINNPLLTI…YFESWSASLA (140 aa). The Cu cation site is built by H161, C196, E198, C200, H204, and M207. Mg(2+) is bound at residue E198. Y218 bears the Phosphotyrosine mark.

This sequence belongs to the cytochrome c oxidase subunit 2 family. In terms of assembly, component of the cytochrome c oxidase (complex IV, CIV), a multisubunit enzyme composed of 14 subunits. The complex is composed of a catalytic core of 3 subunits MT-CO1, MT-CO2 and MT-CO3, encoded in the mitochondrial DNA, and 11 supernumerary subunits COX4I, COX5A, COX5B, COX6A, COX6B, COX6C, COX7A, COX7B, COX7C, COX8 and NDUFA4, which are encoded in the nuclear genome. The complex exists as a monomer or a dimer and forms supercomplexes (SCs) in the inner mitochondrial membrane with NADH-ubiquinone oxidoreductase (complex I, CI) and ubiquinol-cytochrome c oxidoreductase (cytochrome b-c1 complex, complex III, CIII), resulting in different assemblies (supercomplex SCI(1)III(2)IV(1) and megacomplex MCI(2)III(2)IV(2)). Found in a complex with TMEM177, COA6, COX18, COX20, SCO1 and SCO2. Interacts with TMEM177 in a COX20-dependent manner. Interacts with COX20. Interacts with COX16. The cofactor is Cu cation.

The protein localises to the mitochondrion inner membrane. It catalyses the reaction 4 Fe(II)-[cytochrome c] + O2 + 8 H(+)(in) = 4 Fe(III)-[cytochrome c] + 2 H2O + 4 H(+)(out). Its function is as follows. Component of the cytochrome c oxidase, the last enzyme in the mitochondrial electron transport chain which drives oxidative phosphorylation. The respiratory chain contains 3 multisubunit complexes succinate dehydrogenase (complex II, CII), ubiquinol-cytochrome c oxidoreductase (cytochrome b-c1 complex, complex III, CIII) and cytochrome c oxidase (complex IV, CIV), that cooperate to transfer electrons derived from NADH and succinate to molecular oxygen, creating an electrochemical gradient over the inner membrane that drives transmembrane transport and the ATP synthase. Cytochrome c oxidase is the component of the respiratory chain that catalyzes the reduction of oxygen to water. Electrons originating from reduced cytochrome c in the intermembrane space (IMS) are transferred via the dinuclear copper A center (CU(A)) of subunit 2 and heme A of subunit 1 to the active site in subunit 1, a binuclear center (BNC) formed by heme A3 and copper B (CU(B)). The BNC reduces molecular oxygen to 2 water molecules using 4 electrons from cytochrome c in the IMS and 4 protons from the mitochondrial matrix. This chain is Cytochrome c oxidase subunit 2 (MT-CO2), found in Elephas maximus (Indian elephant).